The primary structure comprises 477 residues: Calcium uptake protein 1, mitochondrial (477 aa).

The N-terminal 33 residues, 1–33 (MFRLNTLSALAELAVGSRWYHGASQPTQTKRRL), are a transit peptide targeting the mitochondrion. A disordered region spans residues 57 to 107 (AESPPCVNSKKPDTEDKERNKDSGEVSSREGRAADAAAEPYPEDKKKKRSG). A compositionally biased stretch (basic and acidic residues) spans 66–89 (KKPDTEDKERNKDSGEVSSREGRA). The segment at 101-112 (KKKKRSGFRDRK) is polybasic region. Ser-124 bears the Phosphoserine; by PKB mark. The k/R-ring stretch occupies residues 128–131 (KIFR). The region spanning 220-255 (TPQRNFEIAFKMFDLNGDGEVDMEEFEQVQSIIRSQ) is the EF-hand 1 domain. The Ca(2+) site is built by Asp-233, Asn-235, Asp-237, Glu-239, and Glu-244. The interval 261–265 (RHRDR) is k/R-ring. The 21-residue stretch at 356-376 (KDGKGLTFQEVENFFTFLKNI) folds into the EF-hand 2; degenerate domain. The EF-hand 3 domain maps to 410–445 (LSDHVCDVVFALFDCDGNGELSNKEFVSIMKQRLMR). The Ca(2+) site is built by Asp-423, Asp-425, Asn-427, Glu-429, and Glu-434. Asymmetric dimethylarginine is present on Arg-457. A C-helix region region spans residues 457–467 (RLMQAMWKCAQ).

Belongs to the MICU1 family. MICU1 subfamily. Heterodimer; disulfide-linked; heterodimerizes with MICU2 or MICU3. Homodimer; disulfide-linked. Component of the uniplex complex, composed of MCU, EMRE/SMDT1, MICU1 and MICU2 (or MICU3) in a 4:4:1:1 stoichiometry. The composition of calcium sensors within the uniplex complex can differ depending on tissues: a MICU1 homodimer can be present instead of the MICU1-MICU2 heterodimer in skeletal-muscle and kidney. MICU1 is recruited to the uniplex complex by EMRE/SMDT1, and it associates with MCU at low calcium levels, occluding the pore of the MCU channel. Associates with the MICOS complex. Interacts with SLC25A23. Interacts with CHCHD4/MIA40; which introduces the interchain disulfide bond with MICU2. Interacts (when methylated) with UCP2; leading to decrease the calcium sensitivity of MICU1. As to quaternary structure, heterodimer; disulfide-linked; heterodimerizes with MICU2 or MICU3. Heterodimerizes with MICU3 in skeletal muscle. Component of the uniplex complex, composed of MCU, EMRE/SMDT1, MICU1 and MICU2 (or MICU3) in a 4:4:1:1 stoichiometry. Also localizes to mitochondrial cristae junctions. In terms of processing, phosphorylation at Ser-124 by AKT1 impairs its maturation and stability. Asymmetric dimethylation at Arg-457 by PRMT1 decreases the calcium sensitivity of MICU1 by promoting interaction with UCP2. Post-translationally, degraded by YME1L1 when not complexed as homodimer or heterodimer. Not degraded when complexed as homodimer or heterodimer; the presence of the interchain disulfide bond protecting MICU1 from degradation by YME1L1. Expressed in skeletal muscle, heart, kidney, liver, brain, lung, fat and spleen. As to expression, specifically expressed in the skeletal muscle.

Its subcellular location is the mitochondrion intermembrane space. It is found in the mitochondrion inner membrane. Its function is as follows. Calcium sensor of the mitochondrial calcium uniporter (MCU) channel, which senses calcium level via its EF-hand domains. MICU1 and MICU2 (or MICU3) form a disulfide-linked heterodimer that stimulates and inhibits MCU activity, depending on the concentration of calcium. At low calcium levels, MICU1 occludes the pore of the MCU channel, preventing mitochondrial calcium uptake. At higher calcium levels, calcium-binding to MICU1 and MICU2 (or MICU3) induces a conformational change that weakens MCU-MICU1 interactions and moves the MICU1-MICU2 heterodimer away from the pore, allowing calcium permeation through the MCU channel. Also required to protect against manganese toxicity by preventing manganese uptake by MCU: mechanistically, manganese-binding to its EF-hand domains does not induce any conformational change, maintaining MCU pore occlusion. Acts as a regulator of mitochondrial cristae structure independently of its ability to regulate the mitochondrial calcium uniporter channel. Regulates glucose-dependent insulin secretion in pancreatic beta-cells by regulating mitochondrial calcium uptake. Induces T-helper 1-mediated autoreactivity, which is accompanied by the release of IFNG. In terms of biological role, isoform that regulates mitochondrial calcium uniporter (MCU) in the skeletal muscle. Compared to other isoforms, this isoform has higher affinity for calcium, promoting mitochondrial calcium uptake at lower calcium concentrations. This allows a rapid response of mitochondrial metabolism and ensures sustained ATP production needed for resistance and strenuous exercise. The sequence is that of Calcium uptake protein 1, mitochondrial from Mus musculus (Mouse).